The sequence spans 110 residues: MEIEKTNRMNALFEFYAALLTDKQMNYIELYYADDYSLAEIAEEFGVSRQAVYDNIKRTEKILEDYEMKLHMYSDYIVRSQIFDQILERYPKDNFLQEQIEILTSIDNRE.

This sequence belongs to the UPF0122 family.

Might take part in the signal recognition particle (SRP) pathway. This is inferred from the conservation of its genetic proximity to ftsY/ffh. May be a regulatory protein. The polypeptide is UPF0122 protein spr1167 (Streptococcus pneumoniae (strain ATCC BAA-255 / R6)).